The sequence spans 442 residues: Protein PhoH2 (442 aa).

One can recognise a PINc domain in the interval 3 to 135; that stretch reads KIYVLDTNVL…LVSKDVLVRV (133 aa). 259-266 contacts ATP; sequence GKAGTGKT.

It in the N-terminal section; belongs to the PINc/VapC protein family. In the C-terminal section; belongs to the PhoH family.

The catalysed reaction is n ATP + n H2O + wound RNA = n ADP + n phosphate + unwound RNA.. It catalyses the reaction ATP + H2O = ADP + phosphate + H(+). It carries out the reaction GTP + H2O = GDP + phosphate + H(+). Unwinds and/or cleaves 5'-tailed RNA in vitro. Has ATPase and GTPase activities. Unlike the protein in mycobacteria there does not seem to be an antitoxin gene upstream, suggesting this is not a toxin-antitoxin system. This Bacillus subtilis (strain 168) protein is Protein PhoH2.